The primary structure comprises 775 residues: MEFKRIFNTVHDIINRLCQHGYKEYIIPPESTTPVELMEYISTIVSKLKAVTRQDERVYRCCGELIHCRINLRSVSMETWLTSPILCLTPRVRQAIEGRRDEIRRAILEPFLKDQYPALATLGLQSALKYEDFYLTKLEEGKLESLCQFFLRLAATVTTEIVNLPKIATLIPGINDGYTWTDVCRVFFTALACQKIVPATPVMMFLGRETGATASCYLMDPESITVGRAVRAITGDVGTVLQSRGGVGISLQSLNLIPTENQTKGLLAVLKLLDCMVMAINSDCERPTGVCVYIEPWHVDLQTVLATRGMLVRDEIFRCDNIFCCLWTPDLFFERYLSYLKGASNVQWTLFDNRADILRTLHGEAFTSTYLRLEREGLGVSSVPIQDIAFTIIRSAAVTGSPFLMFKDACNRNYHMNTQGNAITGSNLCTEIVQKADAHQHGVCNLASINLTTCLSKGPVSFNLNDLQLTARTTVIFLNGVLAAGNFPCKKSCKGVKNNRSLGIGIQGLHTTCLRLGFDLTSQPARRLNVQIAELMLYETMKTSMEMCKIGGLAPFKGFTESKYAKGWLHQDGFSTISYLDLPWCTLRDDICAYGLYNSQFLALMPTVSSAQVTECSEGFSPIYNNMFSKVTTSGELLRPNLDLMDELRDMYSCEEKRLEVINILEKNQWSVIRSFGCLSNSHPLLKYKTAFEYEQEDLVDMCAERAPFIDQSQSMTLFIEERPDGTIPASKIMNLLIRAYKAGLKTGMYYCKIRKATNSGLFAGGELTCTSCAL.

Residues threonine 200, 215–216 (SC), glycine 246, 427–431 (NLCTE), and 606–610 (PTVSS) contribute to the substrate site. Cysteine 216 and cysteine 444 form a disulfide bridge. Asparagine 427 acts as the Proton acceptor in catalysis. The Cysteine radical intermediate role is filled by cysteine 429. Glutamate 431 (proton acceptor) is an active-site residue.

The protein belongs to the ribonucleoside diphosphate reductase large chain family. As to quaternary structure, heterotetramer composed of a homodimer of the large subunit (R1) and a homodimer of the small subunit (R2). Larger multisubunit protein complex are also active, composed of (R1)n(R2)n.

The enzyme catalyses a 2'-deoxyribonucleoside 5'-diphosphate + [thioredoxin]-disulfide + H2O = a ribonucleoside 5'-diphosphate + [thioredoxin]-dithiol. Its function is as follows. Ribonucleoside-diphosphate reductase holoenzyme provides the precursors necessary for viral DNA synthesis. Allows virus growth in non-dividing cells, as well as reactivation from latency in infected hosts. Catalyzes the biosynthesis of deoxyribonucleotides from the corresponding ribonucleotides. This is Ribonucleoside-diphosphate reductase large subunit from Homo sapiens (Human).